The sequence spans 52 residues: UPF0391 membrane protein Avin_10980 (52 aa).

Transmembrane regions (helical) follow at residues 4 to 24 (WSII…GGIA) and 29 to 49 (GIAK…LLFG).

The protein belongs to the UPF0391 family.

The protein resides in the cell membrane. In Azotobacter vinelandii (strain DJ / ATCC BAA-1303), this protein is UPF0391 membrane protein Avin_10980.